The chain runs to 104 residues: Large ribosomal subunit protein uL24 (104 aa).

Belongs to the universal ribosomal protein uL24 family. Part of the 50S ribosomal subunit.

Its function is as follows. One of two assembly initiator proteins, it binds directly to the 5'-end of the 23S rRNA, where it nucleates assembly of the 50S subunit. Functionally, one of the proteins that surrounds the polypeptide exit tunnel on the outside of the subunit. The polypeptide is Large ribosomal subunit protein uL24 (Nitrobacter hamburgensis (strain DSM 10229 / NCIMB 13809 / X14)).